The sequence spans 238 residues: Probable transcriptional regulatory protein CAB166 (238 aa).

This sequence belongs to the TACO1 family.

The protein localises to the cytoplasm. The protein is Probable transcriptional regulatory protein CAB166 of Chlamydia abortus (strain DSM 27085 / S26/3) (Chlamydophila abortus).